The following is a 227-amino-acid chain: Phage shock protein A homolog (227 aa).

Positions 33–125 form a coiled coil; that stretch reads LRNMNSDLAK…AQMRKMHDKL (93 aa). The interval 191 to 211 is disordered; the sequence is SAPQDDMADLSAKYDTGGSSQ.

It belongs to the PspA/Vipp/IM30 family.

The sequence is that of Phage shock protein A homolog (ydjF) from Bacillus subtilis (strain 168).